A 298-amino-acid chain; its full sequence is Tyrosine recombinase XerC (298 aa).

One can recognise a Core-binding (CB) domain in the interval 1 to 84 (MNHIQEAFLN…TLRTFYEYWM (84 aa)). The Tyr recombinase domain occupies 105 to 286 (YLPQFFYEEE…SNQQLRKVYL (182 aa)). Residues arginine 145, lysine 169, histidine 238, arginine 241, and histidine 264 contribute to the active site. The active-site O-(3'-phospho-DNA)-tyrosine intermediate is tyrosine 273.

This sequence belongs to the 'phage' integrase family. XerC subfamily. In terms of assembly, forms a cyclic heterotetrameric complex composed of two molecules of XerC and two molecules of XerD.

It localises to the cytoplasm. Its function is as follows. Site-specific tyrosine recombinase, which acts by catalyzing the cutting and rejoining of the recombining DNA molecules. The XerC-XerD complex is essential to convert dimers of the bacterial chromosome into monomers to permit their segregation at cell division. It also contributes to the segregational stability of plasmids. This Staphylococcus aureus (strain MSSA476) protein is Tyrosine recombinase XerC.